A 1700-amino-acid polypeptide reads, in one-letter code: Balbiani ring protein 3 (1700 aa).

A signal peptide spans 1 to 20; the sequence is MKTLSSLLLVLAVNVLLIQA.

As to expression, salivary gland.

Its subcellular location is the secreted. In terms of biological role, used by the larvae to construct a supramolecular structure, the larval tube. Balbiani ring protein 3 could play a role as a transport protein that binds to other proteins intracellularly and in the gland lumen in order to prevent these from forming water-insoluble fibers too early. In Chironomus tentans (Midge), this protein is Balbiani ring protein 3 (BR3).